Reading from the N-terminus, the 80-residue chain is RNA-binding protein Hfq (80 aa).

The Sm domain maps to 10-70; that stretch reads DIFLNNARKE…ISTVSPAKPI (61 aa).

Belongs to the Hfq family. As to quaternary structure, homohexamer.

Functionally, RNA chaperone that binds small regulatory RNA (sRNAs) and mRNAs to facilitate mRNA translational regulation in response to envelope stress, environmental stress and changes in metabolite concentrations. Also binds with high specificity to tRNAs. The sequence is that of RNA-binding protein Hfq from Clostridium perfringens (strain SM101 / Type A).